The primary structure comprises 341 residues: Phosphate acyltransferase (341 aa).

This sequence belongs to the PlsX family. In terms of assembly, homodimer. Probably interacts with PlsY.

It is found in the cytoplasm. The catalysed reaction is a fatty acyl-[ACP] + phosphate = an acyl phosphate + holo-[ACP]. It participates in lipid metabolism; phospholipid metabolism. Its function is as follows. Catalyzes the reversible formation of acyl-phosphate (acyl-PO(4)) from acyl-[acyl-carrier-protein] (acyl-ACP). This enzyme utilizes acyl-ACP as fatty acyl donor, but not acyl-CoA. This Nostoc sp. (strain PCC 7120 / SAG 25.82 / UTEX 2576) protein is Phosphate acyltransferase.